The chain runs to 129 residues: MNKIYVKKGDKNTQVGDKIDEIEVTFRCKGGPIGEVGTFFGKVVSKILFAKSLYTICEKGKIKKIKKTIELEKSDIDAIMLLFSDEDFNPDDSDDLQIDEPDCNGTWTLIKIISVYTPIDEKDNYDFYV.

This is an uncharacterized protein from Invertebrate iridescent virus 6 (IIV-6).